The chain runs to 444 residues: Tubulin gamma chain (444 aa).

144–150 contributes to the GTP binding site; it reads SGGTGSG.

Belongs to the tubulin family.

The protein localises to the cytoplasm. Its subcellular location is the cytoskeleton. It localises to the microtubule organizing center. It is found in the centrosome. The protein resides in the cell junction. The protein localises to the hemidesmosome. Its subcellular location is the adherens junction. In terms of biological role, tubulin is the major constituent of microtubules. The gamma chain is found at microtubule organizing centers (MTOC) such as the spindle poles or the centrosome, suggesting that it is involved in the minus-end nucleation of microtubule assembly. The polypeptide is Tubulin gamma chain (tbg-1) (Caenorhabditis elegans).